The chain runs to 406 residues: Acetate kinase (406 aa).

Residue asparagine 7 coordinates Mg(2+). Lysine 14 is a binding site for ATP. Arginine 90 serves as a coordination point for substrate. The Proton donor/acceptor role is filled by aspartate 147. Residues 207–211, 283–285, and 331–335 each bind ATP; these read HLGNG, DMR, and GVGEN. Glutamate 385 contributes to the Mg(2+) binding site.

Belongs to the acetokinase family. Homodimer. Requires Mg(2+) as cofactor. Mn(2+) serves as cofactor.

It is found in the cytoplasm. The enzyme catalyses acetate + ATP = acetyl phosphate + ADP. It participates in metabolic intermediate biosynthesis; acetyl-CoA biosynthesis; acetyl-CoA from acetate: step 1/2. Functionally, catalyzes the formation of acetyl phosphate from acetate and ATP. Can also catalyze the reverse reaction. This Thermosipho melanesiensis (strain DSM 12029 / CIP 104789 / BI429) protein is Acetate kinase.